The primary structure comprises 276 residues: NH(3)-dependent NAD(+) synthetase (276 aa).

An ATP-binding site is contributed by 43–50 (GISGGVDS). A Mg(2+)-binding site is contributed by Asp-49. Deamido-NAD(+) is bound at residue Arg-146. Position 166 (Thr-166) interacts with ATP. Residue Glu-171 participates in Mg(2+) binding. 2 residues coordinate deamido-NAD(+): Lys-179 and Asp-186. ATP is bound by residues Lys-195 and Thr-217. Deamido-NAD(+) is bound at residue 266 to 267 (HK).

It belongs to the NAD synthetase family. Homodimer.

It carries out the reaction deamido-NAD(+) + NH4(+) + ATP = AMP + diphosphate + NAD(+) + H(+). It functions in the pathway cofactor biosynthesis; NAD(+) biosynthesis; NAD(+) from deamido-NAD(+) (ammonia route): step 1/1. Its function is as follows. Catalyzes the ATP-dependent amidation of deamido-NAD to form NAD. Uses ammonia as a nitrogen source. The sequence is that of NH(3)-dependent NAD(+) synthetase from Shewanella oneidensis (strain ATCC 700550 / JCM 31522 / CIP 106686 / LMG 19005 / NCIMB 14063 / MR-1).